The chain runs to 550 residues: Chaperonin GroEL (550 aa).

ATP contacts are provided by residues 30–33, Lys-51, 87–91, Gly-415, and Asp-496; these read TLGP and DGTTT.

This sequence belongs to the chaperonin (HSP60) family. In terms of assembly, forms a cylinder of 14 subunits composed of two heptameric rings stacked back-to-back. Interacts with the co-chaperonin GroES.

The protein resides in the cytoplasm. The catalysed reaction is ATP + H2O + a folded polypeptide = ADP + phosphate + an unfolded polypeptide.. Functionally, together with its co-chaperonin GroES, plays an essential role in assisting protein folding. The GroEL-GroES system forms a nano-cage that allows encapsulation of the non-native substrate proteins and provides a physical environment optimized to promote and accelerate protein folding. The chain is Chaperonin GroEL from Rickettsia typhi (strain ATCC VR-144 / Wilmington).